A 272-amino-acid chain; its full sequence is Formamidopyrimidine-DNA glycosylase (272 aa).

Proline 2 serves as the catalytic Schiff-base intermediate with DNA. The Proton donor role is filled by glutamate 3. Lysine 58 serves as the catalytic Proton donor; for beta-elimination activity. DNA-binding residues include histidine 93, arginine 112, and arginine 153. The FPG-type zinc-finger motif lies at 238–272 (HVYGKSGQHCPKCGNILEDLKISNRGTVYCPHCQR). The Proton donor; for delta-elimination activity role is filled by arginine 262.

Belongs to the FPG family. Monomer. It depends on Zn(2+) as a cofactor.

It carries out the reaction Hydrolysis of DNA containing ring-opened 7-methylguanine residues, releasing 2,6-diamino-4-hydroxy-5-(N-methyl)formamidopyrimidine.. The catalysed reaction is 2'-deoxyribonucleotide-(2'-deoxyribose 5'-phosphate)-2'-deoxyribonucleotide-DNA = a 3'-end 2'-deoxyribonucleotide-(2,3-dehydro-2,3-deoxyribose 5'-phosphate)-DNA + a 5'-end 5'-phospho-2'-deoxyribonucleoside-DNA + H(+). Its function is as follows. Involved in base excision repair of DNA damaged by oxidation or by mutagenic agents. Acts as a DNA glycosylase that recognizes and removes damaged bases. Has a preference for oxidized purines, such as 7,8-dihydro-8-oxoguanine (8-oxoG). Has AP (apurinic/apyrimidinic) lyase activity and introduces nicks in the DNA strand. Cleaves the DNA backbone by beta-delta elimination to generate a single-strand break at the site of the removed base with both 3'- and 5'-phosphates. This chain is Formamidopyrimidine-DNA glycosylase, found in Dichelobacter nodosus (strain VCS1703A).